Here is a 207-residue protein sequence, read N- to C-terminus: Octanoyltransferase (207 aa).

The region spanning 27–203 is the BPL/LPL catalytic domain; it reads ADTEDELWVV…HLETQLTPKA (177 aa). Substrate is bound by residues 66 to 73, 133 to 135, and 146 to 148; these read RGGQITYH, SLG, and GLA. The active-site Acyl-thioester intermediate is the Cys-164.

This sequence belongs to the LipB family.

It is found in the cytoplasm. The catalysed reaction is octanoyl-[ACP] + L-lysyl-[protein] = N(6)-octanoyl-L-lysyl-[protein] + holo-[ACP] + H(+). The protein operates within protein modification; protein lipoylation via endogenous pathway; protein N(6)-(lipoyl)lysine from octanoyl-[acyl-carrier-protein]: step 1/2. Functionally, catalyzes the transfer of endogenously produced octanoic acid from octanoyl-acyl-carrier-protein onto the lipoyl domains of lipoate-dependent enzymes. Lipoyl-ACP can also act as a substrate although octanoyl-ACP is likely to be the physiological substrate. The chain is Octanoyltransferase from Neisseria gonorrhoeae (strain ATCC 700825 / FA 1090).